The primary structure comprises 209 residues: MSKVIEINHPLILHKLAILRDEKTGSKDFRKLVEEISMLMAYEVTRDLNTEEVEVKTPVAVTKCKMLSGKKMAVVPILRAGLGMVDGVLNLIPAAKVGHIGLYRDEKTLQPVEYFCKMPQDIAERDIIVVDPMLATGGSAIDALTMLKNRGAKNLKLMCLVGAPEGIEAIKKAHDDVDIYLASIDEKLNEHGYIVPGLGDAGDRLFGTK.

5-phospho-alpha-D-ribose 1-diphosphate is bound by residues arginine 79, arginine 104, and 131-139 (DPMLATGGS). Residues isoleucine 194 and 199–201 (GDA) each bind uracil. Aspartate 200 is a 5-phospho-alpha-D-ribose 1-diphosphate binding site.

This sequence belongs to the UPRTase family. Mg(2+) serves as cofactor.

It carries out the reaction UMP + diphosphate = 5-phospho-alpha-D-ribose 1-diphosphate + uracil. It participates in pyrimidine metabolism; UMP biosynthesis via salvage pathway; UMP from uracil: step 1/1. With respect to regulation, allosterically activated by GTP. Catalyzes the conversion of uracil and 5-phospho-alpha-D-ribose 1-diphosphate (PRPP) to UMP and diphosphate. The sequence is that of Uracil phosphoribosyltransferase from Clostridium beijerinckii (strain ATCC 51743 / NCIMB 8052) (Clostridium acetobutylicum).